Reading from the N-terminus, the 110-residue chain is Integration host factor subunit alpha (110 aa).

This sequence belongs to the bacterial histone-like protein family. As to quaternary structure, heterodimer of an alpha and a beta chain.

In terms of biological role, this protein is one of the two subunits of integration host factor, a specific DNA-binding protein that functions in genetic recombination as well as in transcriptional and translational control. This is Integration host factor subunit alpha from Methylococcus capsulatus (strain ATCC 33009 / NCIMB 11132 / Bath).